Here is a 61-residue protein sequence, read N- to C-terminus: MTFINNDAYSTLGINSFDISKKFISKILIIVINKNTILRYLWSVSEYSVHPRIFYQSLFHQ.

This is an uncharacterized protein from Homo sapiens (Human).